A 151-amino-acid chain; its full sequence is Arginine repressor (151 aa).

It belongs to the ArgR family.

The protein resides in the cytoplasm. It participates in amino-acid biosynthesis; L-arginine biosynthesis [regulation]. In terms of biological role, regulates arginine biosynthesis genes. The protein is Arginine repressor of Enterococcus faecalis (strain ATCC 700802 / V583).